The chain runs to 1305 residues: MTVPATTKDPRDSLLDSPLVHFPSLPRDSYLPHPTEHTVVSIDDEEILPSTRSSLHDVLQVAWSLVLADQTSSPEVVFGMAYDGRTTDDGEQAIMPFRLRLRAEDSVQEALAAAAAVTLQMRQWEHMGLRRFSTMSPQNVVLCQFRNLFVIDHKDPTEDCVERSCTSYSKGYALTVLCEIVDQVIHVHAMFDPLVLPPGQLRLILHQFGDILKTCLRGPPGRVKDLQQIGPDGLNYIYEWNRGGERDEGIVCVHQLIEDRFKQAPFAAAVCAWDGALTYGELDRWAKRIAAQLVEAGVKPGSFVGIYMQKSVLAVVAMVAIVKAGAAFIFLPPFLPTVRLQLMCQRTPVELVLSVATLLRSASDLSVPVQVLDYRAKDEEETAATSGGSEIAQPNHPLYAIFTSGSTGEPKGVVVDRASFGPGVREYCRRAQLGPNSRLFQSVSYAFIVSIFEQLISLALGACICVPSEEQLQNDMEGAMCRYQATWGCMTPSVARTLKPERLSCLKTLALTGEPVNQSDMEQWKDHVNLYTLYGQSETGSTLLINSITGSLADSRGLGRPSTGACWIVDPEDPTTLRPLGAEGELLIETTALARGYMNNLEESARTFIEMPKWLKQLRPQGHRSRCLLTGDIVRYYDTDGTIRLLSRKGTGAKIRGQRVELGEIEHHLRPKFPDARHILVDVVCPAKAGTGHSILVAFVHGPWKDTEKTGELATATSEFRQQARRVIAELRQVLPSFMVPSAIVPLADVPTTATGKVHRKSLRERMSALTVAEILAYNQEDRSAYRAPTTEQEALLLSICAELLYLPASSISLDNSFFQVGGDSLNARQLAAKVRSHGFSLLATDIFEASTLASLASRMRQYNQTDSEVSTAPEGDPFEGLKQELLGELPSSLVKENVEDVYPASDMQARAIRTHMLDYFPFEIKGQLDRHQLQHACETLIRRTPVMRSVFINFRGKMLQVTLRSVAIPYKELTIPTGEDPLSWARLHIAEDKKKTAAFDRPTIRFTLCRQSLQHHIFIVRLPHAIYDGSCLEQVAKQISAAYNAQTLPEAPDFAAYARRCARLRTPSAMDFWRNFLAESEVTRLPHASKGDEVAVIYPGECSPRSPPPGITMATAIKAAWAWVLHKRTGKLDVLFGQVGSTRGIDIPGATDIIGLCLNITAVRVQFAGLQTVEDLLRMLQQQHMRALMYETADWTDIVANASSWPEGTELDSVVLHENFGGLPALDLGDAIGEMADPIFSLSTSNPLTLVTWPSTQTLTSFLLTRENVFQKEYAEGLVTEFNQTLVQFLDFPESSLCSISTCG.

The tract at residues Thr278–Lys672 is adenylation. Residues Ala788–Asn864 enclose the Carrier domain. The residue at position 825 (Ser825) is an O-(pantetheine 4'-phosphoryl)serine. The segment at Lys926–Val1166 is condensation.

Belongs to the NRP synthetase family.

The enzyme catalyses hancockiamide D + (E)-cinnamate + ATP = hancockiamide A + AMP + diphosphate. It catalyses the reaction hancockiamide H + (E)-cinnamate + ATP = hancockiamide G + AMP + diphosphate. It participates in secondary metabolite biosynthesis. Its function is as follows. Nonribosomal peptide synthetase; part of the gene cluster that mediates the biosynthesis of hancockiamides, an unusual new family of N-cinnamoylated piperazines. The NRPS hkm10 and the NmrA-like reductase hkm9 are proposed to convert two molecules of L-Phe to the intermediary piperazine called xenocockiamide A. Xenocockiamide A is then converted to hancockiamide D via a series of hydroxylations and O-methylations. The tyrosinase hkm6 may catalyze an aromatic hydroxylation, then the 2-oxoglutarate-dependent Fe(II) dioxygenase hkm4 and the FAD-dependent phenol hydroxylase hkm7 may catalyze consecutive hydroxylations to install 2 more hydroxy groups, and the methyltransferase hkm8 probably catalyzes two methylations using 2 molecules of S-adenosyl-L-methionine (SAM). The NRPS hkm11 activates and transfers trans-cinnamate supplied by the PAL hkm12 to hancockiamide D and produces hancockiamide A. NRPS Hkm11 has the flexibility to tolerate the bulky hancockiamide G as a substrate and the absence of the acetyl-transferase hkm3 opens up the opportunity for hkm11 to introduce a second N-cinnamoyl moiety. The cytochrome P450 monooxygenase hkm5 catalyzes the methylenedioxy bridge formation, converting hancockiamide A into hancockiamide G. Hkm5 can also convert hancockiamide B into hancockiamide C, and hancockiamide D into hancockiamide H. The N-acetyltransferase hkm3 finally transfers an acetyl group to 1-N of piperazine, converting hancockiamide A into hancockiamide B and hancockiamide G into hancockiamide C. This is Nonribosomal peptide synthetase hkm11 from Aspergillus hancockii.